The primary structure comprises 244 residues: Agamous-like MADS-box protein MADS2 (244 aa).

The MADS-box domain maps to 1–61 (MGRGRVELKR…GKLYEFCSSS (61 aa)). The K-box domain occupies 88–178 (EQSSYREYLK…TRKLDEISVK (91 aa)).

Expressed in flowers and seeds.

Its subcellular location is the nucleus. Functionally, probable transcription factor involved in flower development. This chain is Agamous-like MADS-box protein MADS2, found in Vitis vinifera (Grape).